An 84-amino-acid polypeptide reads, in one-letter code: MNDHKLVFWVRSLRVTVNLFWSTVSSPSSMRNTTMRDKSNVSVRILLSNLLFQSTHFTDLLIDESRISFVTIDSNTGGIIASIF.

This is an uncharacterized protein from Saccharomyces cerevisiae (strain ATCC 204508 / S288c) (Baker's yeast).